The chain runs to 97 residues: Large ribosomal subunit protein uL23 (97 aa).

It belongs to the universal ribosomal protein uL23 family. Part of the 50S ribosomal subunit. Contacts protein L29, and trigger factor when it is bound to the ribosome.

One of the early assembly proteins it binds 23S rRNA. One of the proteins that surrounds the polypeptide exit tunnel on the outside of the ribosome. Forms the main docking site for trigger factor binding to the ribosome. The chain is Large ribosomal subunit protein uL23 from Sinorhizobium fredii (strain NBRC 101917 / NGR234).